The primary structure comprises 434 residues: 23S rRNA (uracil(1939)-C(5))-methyltransferase RlmD (434 aa).

Residues 10-68 form the TRAM domain; that stretch reads RVTTRQIITVTVNDLDPFGQGVARHQGKALFVSGVLPHEQAEVVLVEDKKQYARAEVKR. The [4Fe-4S] cluster site is built by C81, C87, C90, and C162. Q265, F294, N299, E315, N342, and D363 together coordinate S-adenosyl-L-methionine. C389 serves as the catalytic Nucleophile.

The protein belongs to the class I-like SAM-binding methyltransferase superfamily. RNA M5U methyltransferase family. RlmD subfamily.

The enzyme catalyses uridine(1939) in 23S rRNA + S-adenosyl-L-methionine = 5-methyluridine(1939) in 23S rRNA + S-adenosyl-L-homocysteine + H(+). In terms of biological role, catalyzes the formation of 5-methyl-uridine at position 1939 (m5U1939) in 23S rRNA. This is 23S rRNA (uracil(1939)-C(5))-methyltransferase RlmD from Klebsiella pneumoniae subsp. pneumoniae (strain ATCC 700721 / MGH 78578).